The chain runs to 236 residues: Phosphoribosylaminoimidazole-succinocarboxamide synthase (236 aa).

The protein belongs to the SAICAR synthetase family.

It catalyses the reaction 5-amino-1-(5-phospho-D-ribosyl)imidazole-4-carboxylate + L-aspartate + ATP = (2S)-2-[5-amino-1-(5-phospho-beta-D-ribosyl)imidazole-4-carboxamido]succinate + ADP + phosphate + 2 H(+). The protein operates within purine metabolism; IMP biosynthesis via de novo pathway; 5-amino-1-(5-phospho-D-ribosyl)imidazole-4-carboxamide from 5-amino-1-(5-phospho-D-ribosyl)imidazole-4-carboxylate: step 1/2. This is Phosphoribosylaminoimidazole-succinocarboxamide synthase from Campylobacter curvus (strain 525.92).